A 348-amino-acid chain; its full sequence is Holliday junction branch migration complex subunit RuvB (348 aa).

A large ATPase domain (RuvB-L) region spans residues 1-183 (MTEASRIVAP…FGIPVRLNFY (183 aa)). ATP-binding positions include L22, R23, G64, K67, T68, T69, 130–132 (EDF), R173, Y183, and R220. T68 lines the Mg(2+) pocket. Residues 184 to 254 (TEDELEKIVS…VADHALGALE (71 aa)) form a small ATPAse domain (RuvB-S) region. Positions 257–348 (AAGLDAMDRR…SGLFGQDEDR (92 aa)) are head domain (RuvB-H). Positions 293, 312, and 317 each coordinate DNA. The disordered stretch occupies residues 329–348 (LTEPSRDPAQSGLFGQDEDR).

Belongs to the RuvB family. As to quaternary structure, homohexamer. Forms an RuvA(8)-RuvB(12)-Holliday junction (HJ) complex. HJ DNA is sandwiched between 2 RuvA tetramers; dsDNA enters through RuvA and exits via RuvB. An RuvB hexamer assembles on each DNA strand where it exits the tetramer. Each RuvB hexamer is contacted by two RuvA subunits (via domain III) on 2 adjacent RuvB subunits; this complex drives branch migration. In the full resolvosome a probable DNA-RuvA(4)-RuvB(12)-RuvC(2) complex forms which resolves the HJ.

It localises to the cytoplasm. The enzyme catalyses ATP + H2O = ADP + phosphate + H(+). Functionally, the RuvA-RuvB-RuvC complex processes Holliday junction (HJ) DNA during genetic recombination and DNA repair, while the RuvA-RuvB complex plays an important role in the rescue of blocked DNA replication forks via replication fork reversal (RFR). RuvA specifically binds to HJ cruciform DNA, conferring on it an open structure. The RuvB hexamer acts as an ATP-dependent pump, pulling dsDNA into and through the RuvAB complex. RuvB forms 2 homohexamers on either side of HJ DNA bound by 1 or 2 RuvA tetramers; 4 subunits per hexamer contact DNA at a time. Coordinated motions by a converter formed by DNA-disengaged RuvB subunits stimulates ATP hydrolysis and nucleotide exchange. Immobilization of the converter enables RuvB to convert the ATP-contained energy into a lever motion, pulling 2 nucleotides of DNA out of the RuvA tetramer per ATP hydrolyzed, thus driving DNA branch migration. The RuvB motors rotate together with the DNA substrate, which together with the progressing nucleotide cycle form the mechanistic basis for DNA recombination by continuous HJ branch migration. Branch migration allows RuvC to scan DNA until it finds its consensus sequence, where it cleaves and resolves cruciform DNA. The sequence is that of Holliday junction branch migration complex subunit RuvB from Nitrobacter winogradskyi (strain ATCC 25391 / DSM 10237 / CIP 104748 / NCIMB 11846 / Nb-255).